We begin with the raw amino-acid sequence, 144 residues long: UPF0306 protein Spro_0510 (144 aa).

It belongs to the UPF0306 family.

In Serratia proteamaculans (strain 568), this protein is UPF0306 protein Spro_0510.